The primary structure comprises 362 residues: MACLKLQAVTKSYDGVTPVIKQIDLDVTDGEFIVMVGPSGCGKSTLLRMVAGLERTTSGDIYIDNLRVTDMEPKDRGIAMVFQNYALYPHMSVFDNMAYGLKIRGFGKEQIRQRVDEAARILELEPLLKRKPRELSGGQRQRVAMGRAIVREPAVFLFDEPLSNLDAKLRVQMRLELQQLHRRLKTTSLYVTHDQVEAMTLAQRVIVMNKGVAEQIGTPSEVYQRPATLFVASFIGSPAMNLLAGTVSPDGRAFILADGMTLPLEVPRPQWADRRLTLGIRPEHIQQRVSQQKTSAQGVPMTLLTLELLGADNLAHGQWGGQSVIARLSHEEMPTAGSVLYLYLPPAALHFFDSESGLRMES.

The 232-residue stretch at 4–235 folds into the ABC transporter domain; the sequence is LKLQAVTKSY…PATLFVASFI (232 aa). An ATP-binding site is contributed by 37-44; sequence GPSGCGKS.

The protein belongs to the ABC transporter superfamily. sn-glycerol-3-phosphate importer (TC 3.A.1.1.3) family. In terms of assembly, the complex is composed of two ATP-binding proteins (UgpC), two transmembrane proteins (UgpA and UgpE) and a solute-binding protein (UgpB).

The protein resides in the cell inner membrane. It carries out the reaction sn-glycerol 3-phosphate(out) + ATP + H2O = sn-glycerol 3-phosphate(in) + ADP + phosphate + H(+). Functionally, part of the ABC transporter complex UgpBAEC involved in sn-glycerol-3-phosphate (G3P) import. Responsible for energy coupling to the transport system. The polypeptide is sn-glycerol-3-phosphate import ATP-binding protein UgpC (Yersinia enterocolitica serotype O:8 / biotype 1B (strain NCTC 13174 / 8081)).